The primary structure comprises 454 residues: Bifunctional protein GlmU (454 aa).

The segment at 1–228 is pyrophosphorylase; sequence MTLPLHVVIL…PQDVEGANDP (228 aa). UDP-N-acetyl-alpha-D-glucosamine is bound by residues 10–13, K24, Q76, 81–82, 103–105, G138, E153, N168, and N226; these read LAAG, GT, and YGD. Residue D105 coordinates Mg(2+). N226 lines the Mg(2+) pocket. The tract at residues 229-249 is linker; it reads WQLAQLERAWQLRAARALCLQ. An N-acetyltransferase region spans residues 250-454; sequence GVRMADPARV…IEGWERPKKK (205 aa). R332 and K350 together coordinate UDP-N-acetyl-alpha-D-glucosamine. H362 acts as the Proton acceptor in catalysis. UDP-N-acetyl-alpha-D-glucosamine-binding residues include Y365 and N376. Acetyl-CoA is bound by residues A379, 385–386, S404, A422, and R439; that span reads NY.

The protein in the N-terminal section; belongs to the N-acetylglucosamine-1-phosphate uridyltransferase family. This sequence in the C-terminal section; belongs to the transferase hexapeptide repeat family. In terms of assembly, homotrimer. Mg(2+) serves as cofactor.

The protein localises to the cytoplasm. It catalyses the reaction alpha-D-glucosamine 1-phosphate + acetyl-CoA = N-acetyl-alpha-D-glucosamine 1-phosphate + CoA + H(+). The enzyme catalyses N-acetyl-alpha-D-glucosamine 1-phosphate + UTP + H(+) = UDP-N-acetyl-alpha-D-glucosamine + diphosphate. It participates in nucleotide-sugar biosynthesis; UDP-N-acetyl-alpha-D-glucosamine biosynthesis; N-acetyl-alpha-D-glucosamine 1-phosphate from alpha-D-glucosamine 6-phosphate (route II): step 2/2. Its pathway is nucleotide-sugar biosynthesis; UDP-N-acetyl-alpha-D-glucosamine biosynthesis; UDP-N-acetyl-alpha-D-glucosamine from N-acetyl-alpha-D-glucosamine 1-phosphate: step 1/1. It functions in the pathway bacterial outer membrane biogenesis; LPS lipid A biosynthesis. Its function is as follows. Catalyzes the last two sequential reactions in the de novo biosynthetic pathway for UDP-N-acetylglucosamine (UDP-GlcNAc). The C-terminal domain catalyzes the transfer of acetyl group from acetyl coenzyme A to glucosamine-1-phosphate (GlcN-1-P) to produce N-acetylglucosamine-1-phosphate (GlcNAc-1-P), which is converted into UDP-GlcNAc by the transfer of uridine 5-monophosphate (from uridine 5-triphosphate), a reaction catalyzed by the N-terminal domain. In Xanthomonas campestris pv. campestris (strain 8004), this protein is Bifunctional protein GlmU.